The sequence spans 145 residues: Large ribosomal subunit protein uL24 (145 aa).

2 disordered regions span residues 1–21 (MKFN…HFNA) and 122–145 (KAKS…KMQE). Lysine 136 is covalently cross-linked (Glycyl lysine isopeptide (Lys-Gly) (interchain with G-Cter in SUMO2)). At threonine 139 the chain carries Phosphothreonine.

It belongs to the universal ribosomal protein uL24 family. In terms of assembly, component of the large ribosomal subunit. Interacts with DHX33. Ufmylated by UFL1 in response to endoplasmic reticulum stress, promoting reticulophagy of endoplasmic reticulum sheets.

It localises to the cytoplasm. Component of the large ribosomal subunit. The ribosome is a large ribonucleoprotein complex responsible for the synthesis of proteins in the cell. The sequence is that of Large ribosomal subunit protein uL24 (Rpl26) from Rattus norvegicus (Rat).